Here is a 525-residue protein sequence, read N- to C-terminus: Nucleolar and spindle-associated protein 1-A (525 aa).

Disordered stretches follow at residues 46–205 (ESKD…LHEA), 248–292 (EKTP…RFSA), 373–397 (TPES…PEKA), and 451–525 (SLSR…VPVQ). Positions 58–69 (SSLTDTDELNSS) are enriched in polar residues. Basic residues predominate over residues 82 to 92 (THRRGRGRKPL). The span at 106-127 (SVGTGTESLASETDNTQDQNCL) shows a compositional bias: polar residues. The segment covering 160–169 (TTEKRQKKAS) has biased composition (basic and acidic residues). Over residues 270–285 (PPTTGASPSRTPTNQR) the composition is skewed to polar residues. Polar residues predominate over residues 476–494 (CGSNNNVSVLKNNFKQPHL). Residues 495-514 (QTREDRRKQHEQDRKGKRDQ) show a composition bias toward basic and acidic residues.

It belongs to the NUSAP family. In terms of assembly, interacts with DNA. Interacts with microtubules, ipo7, kpna2 and kpnb1. Microtubule stabilization is inhibited by ipo7 and kpna2, while microtubule bundling is inhibited by kpnb1. Active GTP-bound ran causes dissociation of ipo7 and kpnb1.

It localises to the cytoplasm. The protein localises to the nucleus. Its subcellular location is the cytoskeleton. The protein resides in the spindle. Microtubule-associated protein with the capacity to bundle and stabilize microtubules. May associate with chromosomes and promote the organization of meiotic or mitotic spindle microtubules around them. The polypeptide is Nucleolar and spindle-associated protein 1-A (nusap1-a) (Xenopus laevis (African clawed frog)).